Here is a 232-residue protein sequence, read N- to C-terminus: Lipid A 1-phosphatase (232 aa).

6 helical membrane passes run 10–30 (LFIT…PVGA), 42–62 (ELLT…LLFF), 80–100 (ALYV…SGLL), 136–156 (FPSG…LLFP), 160–180 (VAFI…GAHY), and 183–203 (DVIA…IVYA).

This sequence belongs to the lipid A LpxE 1-phosphatase family.

Its subcellular location is the cell inner membrane. The protein operates within bacterial outer membrane biogenesis; LPS lipid A biosynthesis. In terms of biological role, probably removes the 1-phosphate moiety from lipid A species. Does not seem to act on other membrane components, nor does it dephosphorylate the 4'-phosphate group of lipid A and/or lipid A precursors. In Rhizobium etli (strain ATCC 51251 / DSM 11541 / JCM 21823 / NBRC 15573 / CFN 42), this protein is Lipid A 1-phosphatase.